Reading from the N-terminus, the 20-residue chain is GMP synthase [glutamine-hydrolyzing] (20 aa).

Residues 1 to 20 (ALGDQLLSVFVDHTLVDEVA) enclose the GMPS ATP-PPase domain.

Homodimer.

It catalyses the reaction XMP + L-glutamine + ATP + H2O = GMP + L-glutamate + AMP + diphosphate + 2 H(+). Its pathway is purine metabolism; GMP biosynthesis; GMP from XMP (L-Gln route): step 1/1. Its function is as follows. Catalyzes the synthesis of GMP from XMP. The polypeptide is GMP synthase [glutamine-hydrolyzing] (guaA) (Fructilactobacillus sanfranciscensis (Lactobacillus sanfranciscensis)).